A 163-amino-acid polypeptide reads, in one-letter code: Protein-export protein SecB (163 aa).

This sequence belongs to the SecB family. Homotetramer, a dimer of dimers. One homotetramer interacts with 1 SecA dimer.

It localises to the cytoplasm. Its function is as follows. One of the proteins required for the normal export of preproteins out of the cell cytoplasm. It is a molecular chaperone that binds to a subset of precursor proteins, maintaining them in a translocation-competent state. It also specifically binds to its receptor SecA. The protein is Protein-export protein SecB of Brucella abortus (strain S19).